The sequence spans 197 residues: Molybdenum cofactor guanylyltransferase (197 aa).

GTP-binding positions include 12-14 (LAG), lysine 25, asparagine 53, aspartate 71, and aspartate 101. Residue aspartate 101 participates in Mg(2+) binding.

The protein belongs to the MobA family. In terms of assembly, monomer. Mg(2+) serves as cofactor.

It localises to the cytoplasm. The enzyme catalyses Mo-molybdopterin + GTP + H(+) = Mo-molybdopterin guanine dinucleotide + diphosphate. Functionally, transfers a GMP moiety from GTP to Mo-molybdopterin (Mo-MPT) cofactor (Moco or molybdenum cofactor) to form Mo-molybdopterin guanine dinucleotide (Mo-MGD) cofactor. This chain is Molybdenum cofactor guanylyltransferase, found in Bordetella pertussis (strain Tohama I / ATCC BAA-589 / NCTC 13251).